Here is a 37-residue protein sequence, read N- to C-terminus: Large ribosomal subunit protein bL36c (37 aa).

It belongs to the bacterial ribosomal protein bL36 family.

It localises to the plastid. The protein localises to the chloroplast. This is Large ribosomal subunit protein bL36c (rpl36) from Pisum sativum (Garden pea).